Reading from the N-terminus, the 313-residue chain is Malate dehydrogenase (313 aa).

11–16 (GAGHTG) contacts NAD(+). Arginine 86 and arginine 92 together coordinate substrate. NAD(+) is bound by residues asparagine 99 and 122–124 (LTN). 2 residues coordinate substrate: asparagine 124 and arginine 155. Histidine 179 acts as the Proton acceptor in catalysis.

The protein belongs to the LDH/MDH superfamily. MDH type 3 family.

The catalysed reaction is (S)-malate + NAD(+) = oxaloacetate + NADH + H(+). In terms of biological role, catalyzes the reversible oxidation of malate to oxaloacetate. In Staphylococcus epidermidis (strain ATCC 35984 / DSM 28319 / BCRC 17069 / CCUG 31568 / BM 3577 / RP62A), this protein is Malate dehydrogenase.